The following is a 336-amino-acid chain: Immune-associated nucleotide-binding protein 13 (336 aa).

The region spanning 15–221 (KPERTLVLLG…YMADLSHELR (207 aa)) is the AIG1-type G domain. Residues 24-31 (GRTGNGKS) form a G1 region. GTP contacts are provided by residues 24–32 (GRTGNGKSA) and S45. Residues 51–55 (FITKE) form a G2 region. Residues 73–76 (DTPG) form a G3 region. The G4 stretch occupies residues 143–146 (TNED). Positions 179–181 (DNS) are G5. N180 contacts GTP. Positions 265 to 328 (KEKISNQLKE…EKETASLRTE (64 aa)) form a coiled coil.

Belongs to the TRAFAC class TrmE-Era-EngA-EngB-Septin-like GTPase superfamily. AIG1/Toc34/Toc159-like paraseptin GTPase family. IAN subfamily. Expressed in pollen grains.

This Arabidopsis thaliana (Mouse-ear cress) protein is Immune-associated nucleotide-binding protein 13.